Consider the following 520-residue polypeptide: mRNA-capping enzyme subunit beta (520 aa).

The tract at residues 1–185 is disordered; the sequence is MNVGSILNDD…PQPVFDDQDD (185 aa). 2 stretches are compositionally biased toward polar residues: residues 11-21 and 44-56; these read PPSSGNANGND and ITSMLNDTPSDST. Residues 92–108 show a composition bias toward low complexity; that stretch reads SSSSVGSSEHSSARSSP. Basic and acidic residues-rich tracts occupy residues 126–135 and 149–176; these read PATKTEKKAE and KLEEHENDTNKVEKVVDSAPEPKPKKEP.

It belongs to the fungal TPase family. As to quaternary structure, heterodimer. The mRNA-capping enzyme is composed of two separate chains alpha and beta, respectively a mRNA guanylyltransferase and an mRNA 5'-triphosphate monophosphatase. Mg(2+) is required as a cofactor.

It is found in the nucleus. The catalysed reaction is a 5'-end triphospho-ribonucleoside in mRNA + H2O = a 5'-end diphospho-ribonucleoside in mRNA + phosphate + H(+). First step of mRNA capping. Converts the 5'-triphosphate end of a nascent mRNA chain into a diphosphate end. This Candida albicans (strain SC5314 / ATCC MYA-2876) (Yeast) protein is mRNA-capping enzyme subunit beta (CET1).